The primary structure comprises 378 residues: Putative glycosyltransferase ORF378 (378 aa).

Belongs to the glycosyltransferase group 1 family. Glycosyltransferase 4 subfamily.

The protein is Putative glycosyltransferase ORF378 of Acidianus sp. F28 (AFV-2).